Consider the following 252-residue polypeptide: Putative phosphonates utilization ATP-binding protein PhnK (252 aa).

The ABC transporter domain maps to 6–246; the sequence is LSVNNLTHLY…PHHPYTQLLV (241 aa). ATP is bound at residue 38 to 45; that stretch reads GESGSGKT.

It belongs to the ABC transporter superfamily. In terms of assembly, forms a complex with PhnG, PhnH, PhnI and PhnJ with the suggested composition PhnG(4)H(2)I(2)J(2)K.

In terms of biological role, belongs to an operon involved in alkylphosphonate uptake and C-P lyase. Exact function not known. PhnK is not required for the ribophosphonate triphosphate (RPnTP) synthase reaction. The chain is Putative phosphonates utilization ATP-binding protein PhnK (phnK) from Escherichia coli (strain K12).